Here is an 899-residue protein sequence, read N- to C-terminus: Protein translocase subunit SecA (899 aa).

ATP-binding positions include Gln-87, 105–109 (GEGKT), and Asp-512. Disordered stretches follow at residues 573–592 (RRIDNQLRGRSGRQGDPGSS) and 861–899 (ITVNDDEHPAEPAKSQKNAGRNEPCPCGSGKKYKKCCGK). Residues Cys-885, Cys-887, Cys-896, and Cys-897 each coordinate Zn(2+).

Belongs to the SecA family. Monomer and homodimer. Part of the essential Sec protein translocation apparatus which comprises SecA, SecYEG and auxiliary proteins SecDF-YajC and YidC. It depends on Zn(2+) as a cofactor.

It is found in the cell inner membrane. The protein resides in the cytoplasm. The catalysed reaction is ATP + H2O + cellular proteinSide 1 = ADP + phosphate + cellular proteinSide 2.. Functionally, part of the Sec protein translocase complex. Interacts with the SecYEG preprotein conducting channel. Has a central role in coupling the hydrolysis of ATP to the transfer of proteins into and across the cell membrane, serving as an ATP-driven molecular motor driving the stepwise translocation of polypeptide chains across the membrane. The polypeptide is Protein translocase subunit SecA (Trichlorobacter lovleyi (strain ATCC BAA-1151 / DSM 17278 / SZ) (Geobacter lovleyi)).